Consider the following 187-residue polypeptide: Protein ECM23 (187 aa).

2 disordered regions span residues 106 to 127 and 167 to 187; these read GKKSLAGYRPKSRKKQTILPNG and KKIRSQQSSDDGTKNFIFKNK. The segment at 126 to 180 adopts a GATA-type zinc-finger fold; sequence NGQPKECATCGDTWTSQWRSGPNGNVELCSRCGIAYRKKMEKKIRSQQSSDDGTK.

Its function is as follows. Involved in morphogenesis. May be involved in cell wall organization and biogenesis. The sequence is that of Protein ECM23 (ECM23) from Saccharomyces cerevisiae (strain ATCC 204508 / S288c) (Baker's yeast).